Reading from the N-terminus, the 64-residue chain is Large ribosomal subunit protein bL33c (64 aa).

Belongs to the bacterial ribosomal protein bL33 family.

The protein localises to the plastid. Its subcellular location is the chloroplast. This is Large ribosomal subunit protein bL33c from Phaeodactylum tricornutum (strain CCAP 1055/1).